Reading from the N-terminus, the 65-residue chain is Large ribosomal subunit protein bL33c (65 aa).

It belongs to the bacterial ribosomal protein bL33 family.

It localises to the plastid. Its subcellular location is the chloroplast. In Porphyra purpurea (Red seaweed), this protein is Large ribosomal subunit protein bL33c (rpl33).